The chain runs to 876 residues: Alanine--tRNA ligase (876 aa).

Residue K74 is modified to N6-acetyllysine. Positions 564, 568, 666, and 670 each coordinate Zn(2+).

It belongs to the class-II aminoacyl-tRNA synthetase family. In terms of assembly, homotetramer. Zn(2+) serves as cofactor.

The protein resides in the cytoplasm. The enzyme catalyses tRNA(Ala) + L-alanine + ATP = L-alanyl-tRNA(Ala) + AMP + diphosphate. In terms of biological role, catalyzes the attachment of alanine to tRNA(Ala) in a two-step reaction: alanine is first activated by ATP to form Ala-AMP and then transferred to the acceptor end of tRNA(Ala). Also edits incorrectly charged Ser-tRNA(Ala) and Gly-tRNA(Ala) via its editing domain. In Escherichia coli (strain ATCC 8739 / DSM 1576 / NBRC 3972 / NCIMB 8545 / WDCM 00012 / Crooks), this protein is Alanine--tRNA ligase.